Consider the following 144-residue polypeptide: Effector EagT6 (144 aa).

As to quaternary structure, homodimer. Two dimers interact with Tse6; this interaction is crucial for Tse6 loading onto VgrG1a.

Its function is as follows. Plays an essential role in toxin Tse6 delivery to target cells and specifically in the loading of Tse6 onto VgrG1a. The polypeptide is Effector EagT6 (Pseudomonas aeruginosa (strain ATCC 15692 / DSM 22644 / CIP 104116 / JCM 14847 / LMG 12228 / 1C / PRS 101 / PAO1)).